The sequence spans 87 residues: Small ribosomal subunit protein bS20 (87 aa).

Belongs to the bacterial ribosomal protein bS20 family.

Functionally, binds directly to 16S ribosomal RNA. The sequence is that of Small ribosomal subunit protein bS20 from Roseobacter denitrificans (strain ATCC 33942 / OCh 114) (Erythrobacter sp. (strain OCh 114)).